The following is an 86-amino-acid chain: Toxin Aam2 (86 aa).

Residues 1 to 20 (MNYLITISLALLLMTGVASG) form the signal peptide. Residues 22–84 (RDGYIADAGN…VPIKVPGKCN (63 aa)) enclose the LCN-type CS-alpha/beta domain. Intrachain disulfides connect Cys-32-Cys-83, Cys-36-Cys-56, Cys-42-Cys-66, and Cys-46-Cys-68. Asparagine amide is present on Asn-84.

It belongs to the long (4 C-C) scorpion toxin superfamily. Sodium channel inhibitor family. Alpha subfamily. In terms of tissue distribution, expressed by the venom gland.

Its subcellular location is the secreted. In terms of biological role, alpha toxins bind voltage-independently at site-3 of sodium channels (Nav) and inhibit the inactivation of the activated channels, thereby blocking neuronal transmission. This Androctonus amoreuxi (African fattail scorpion) protein is Toxin Aam2.